A 294-amino-acid chain; its full sequence is ATP synthase gamma chain (294 aa).

The protein belongs to the ATPase gamma chain family. F-type ATPases have 2 components, CF(1) - the catalytic core - and CF(0) - the membrane proton channel. CF(1) has five subunits: alpha(3), beta(3), gamma(1), delta(1), epsilon(1). CF(0) has three main subunits: a, b and c.

The protein localises to the cell inner membrane. Its function is as follows. Produces ATP from ADP in the presence of a proton gradient across the membrane. The gamma chain is believed to be important in regulating ATPase activity and the flow of protons through the CF(0) complex. The protein is ATP synthase gamma chain of Campylobacter jejuni (strain RM1221).